Reading from the N-terminus, the 683-residue chain is uncharacterized protein (683 aa).

Transmembrane regions (helical) follow at residues 12-32 (LLLYYGLFTLGLFGFVGMMGL), 41-61 (LWLGYVFLFITIAIYACIGLI), 84-104 (MAIAADWMSAASFIGLAGILF), 110-130 (GLAYVMGWTGGYCLVAFLLAP), 162-182 (IAVLAASLCSFVYLVAQIQGV), 194-214 (FAVGIFFGLAGILVCSFLGGM), 221-241 (QVAQYIMMIVAFLVTVSMIAW), 377-397 (LNFVLLVFCLMVGTASLPHIL), 413-433 (VAWAVFFIALLYVSAPTLAAL), 495-515 (IAGLPYVISGLIAAGALAAAL), 548-568 (VTTAKIVLLGVALFASYVTSL), 573-593 (ILFLVGAAFSLAASSFFPVLV), 603-623 (AAGAVAGMAAGLGVAVYYIIV), and 645-665 (IASGAFGVPAGFAVAIIVSLL).

Belongs to the sodium:solute symporter (SSF) (TC 2.A.21) family.

It localises to the cell membrane. This is an uncharacterized protein from Cupriavidus necator (strain ATCC 17699 / DSM 428 / KCTC 22496 / NCIMB 10442 / H16 / Stanier 337) (Ralstonia eutropha).